Here is a 311-residue protein sequence, read N- to C-terminus: Probable manganese-dependent inorganic pyrophosphatase (311 aa).

Residues histidine 9, aspartate 13, aspartate 15, aspartate 75, histidine 97, and aspartate 149 each contribute to the Mn(2+) site.

Belongs to the PPase class C family. Mn(2+) serves as cofactor.

It is found in the cytoplasm. The enzyme catalyses diphosphate + H2O = 2 phosphate + H(+). This chain is Probable manganese-dependent inorganic pyrophosphatase, found in Lactobacillus gasseri (strain ATCC 33323 / DSM 20243 / BCRC 14619 / CIP 102991 / JCM 1131 / KCTC 3163 / NCIMB 11718 / NCTC 13722 / AM63).